A 477-amino-acid polypeptide reads, in one-letter code: Proline--tRNA ligase (477 aa).

Belongs to the class-II aminoacyl-tRNA synthetase family. ProS type 3 subfamily. In terms of assembly, homodimer.

Its subcellular location is the cytoplasm. The catalysed reaction is tRNA(Pro) + L-proline + ATP = L-prolyl-tRNA(Pro) + AMP + diphosphate. Its function is as follows. Catalyzes the attachment of proline to tRNA(Pro) in a two-step reaction: proline is first activated by ATP to form Pro-AMP and then transferred to the acceptor end of tRNA(Pro). This Methanocorpusculum labreanum (strain ATCC 43576 / DSM 4855 / Z) protein is Proline--tRNA ligase.